A 347-amino-acid chain; its full sequence is Globoside alpha-1,3-N-acetylgalactosaminyltransferase 1 (347 aa).

At 1–6 the chain is on the cytoplasmic side; it reads MTRPRL. Residues 7–27 traverse the membrane as a helical; Signal-anchor for type II membrane protein segment; sequence AQGLAFFLLGGTGLWVLWKFI. Residues 28 to 347 lie on the Lumenal side of the membrane; sequence KDWLLVSYIP…VKKNANWLRT (320 aa). An N-linked (GlcNAc...) asparagine glycan is attached at Asn-108. Substrate contacts are provided by residues 116–121, 206–208, and 228–231; these read FAVGKY, DVD, and HPGY. 2 residues coordinate Mn(2+): Asp-206 and Asp-208. The active-site Nucleophile is the Glu-298.

This sequence belongs to the glycosyltransferase 6 family. Mn(2+) is required as a cofactor.

It is found in the golgi apparatus membrane. The enzyme catalyses a globoside Gb4Cer (d18:1(4E)) + UDP-N-acetyl-alpha-D-galactosamine = a globoside Forssman (d18:1(4E)) + UDP + H(+). The catalysed reaction is a globoside Gb4Cer + UDP-N-acetyl-alpha-D-galactosamine = a globoside IV3GalNAc-Gb4Cer + UDP + H(+). The protein operates within protein modification; protein glycosylation. Its function is as follows. Catalyzes the formation of Forssman glycolipid via the addition of N-acetylgalactosamine (GalNAc) in alpha-1,3-linkage to GalNAcb-1,3Gala-1,4Galb-1,4GlcCer (Gb4Cer). Forssman glycolipid (also called Forssman antigen; FG) probably serves for adherence of some pathogens. Conversely, it diminishes Shiga toxins susceptibility. The polypeptide is Globoside alpha-1,3-N-acetylgalactosaminyltransferase 1 (Mus musculus (Mouse)).